Here is an 82-residue protein sequence, read N- to C-terminus: U17-hexatoxin-Hi1a (82 aa).

An N-terminal signal peptide occupies residues 1 to 21 (MKTIFAVTLLLFAIYVPECMP). 5 cysteine pairs are disulfide-bonded: Cys22-Cys33, Cys27-Cys48, Cys32-Cys61, Cys58-Cys69, and Cys63-Cys75.

As to expression, expressed by the venom gland.

Its subcellular location is the secreted. Probable ion channel inhibitor. In Hadronyche infensa (Fraser island funnel-web spider), this protein is U17-hexatoxin-Hi1a.